The following is a 272-amino-acid chain: Putative pyruvate, phosphate dikinase regulatory protein (272 aa).

ADP is bound at residue 153–160 (GVSRTSKT).

This sequence belongs to the pyruvate, phosphate/water dikinase regulatory protein family. PDRP subfamily.

The catalysed reaction is N(tele)-phospho-L-histidyl/L-threonyl-[pyruvate, phosphate dikinase] + ADP = N(tele)-phospho-L-histidyl/O-phospho-L-threonyl-[pyruvate, phosphate dikinase] + AMP + H(+). It carries out the reaction N(tele)-phospho-L-histidyl/O-phospho-L-threonyl-[pyruvate, phosphate dikinase] + phosphate + H(+) = N(tele)-phospho-L-histidyl/L-threonyl-[pyruvate, phosphate dikinase] + diphosphate. In terms of biological role, bifunctional serine/threonine kinase and phosphorylase involved in the regulation of the pyruvate, phosphate dikinase (PPDK) by catalyzing its phosphorylation/dephosphorylation. This Chelativorans sp. (strain BNC1) protein is Putative pyruvate, phosphate dikinase regulatory protein.